A 327-amino-acid chain; its full sequence is Cytochrome c biogenesis protein CcsA (327 aa).

8 helical membrane passes run 13-33 (ISFS…LVNL), 46-66 (GIII…IYSG), 73-93 (LYES…VSYF), 101-121 (LNAI…SGLL), 145-165 (MILG…LLVI), 233-253 (IISL…VWAN), 262-282 (WDPK…YLHI), and 294-314 (AIVA…VNLL).

It belongs to the CcmF/CycK/Ccl1/NrfE/CcsA family. May interact with Ccs1.

The protein resides in the plastid. The protein localises to the chloroplast thylakoid membrane. Required during biogenesis of c-type cytochromes (cytochrome c6 and cytochrome f) at the step of heme attachment. The chain is Cytochrome c biogenesis protein CcsA from Lobularia maritima (Sweet alyssum).